We begin with the raw amino-acid sequence, 435 residues long: Arginine/serine-rich coiled-coil protein 2 (435 aa).

Positions 1–27 are enriched in basic and acidic residues; the sequence is MAASDTERDGLAPEKTSPDRDKKKEQS. The disordered stretch occupies residues 1-230; the sequence is MAASDTERDG…PSPPPFRGRN (230 aa). Ala-2 is modified (N-acetylalanine). Residue Ser-4 is modified to Phosphoserine. A phosphothreonine mark is found at Thr-6 and Thr-16. Residues Ser-17, Ser-30, and Ser-32 each carry the phosphoserine modification. Basic residues predominate over residues 35-51; the sequence is ASKHHYSRSRSRSRERK. Basic and acidic residues predominate over residues 66–111; that stretch reads RSKEARRHESKDKSSKKHKSEEHNDKEHSSDKGRERLNSSENGEDR. Ser-104 carries the post-translational modification Phosphoserine. Residues 112–214 are compositionally biased toward basic residues; it reads HKRKERKSSR…KRIEKPRRFS (103 aa). The stretch at 230–270 forms a coiled coil; the sequence is NTAMDAQEALARRLERAKKLQEQREKEMVEKQKQQEIAAAA. Lys-376 is covalently cross-linked (Glycyl lysine isopeptide (Lys-Gly) (interchain with G-Cter in SUMO1); alternate). Lys-376 is covalently cross-linked (Glycyl lysine isopeptide (Lys-Gly) (interchain with G-Cter in SUMO2); alternate). Residue Ser-377 is modified to Phosphoserine.

It belongs to the RSRC2 family.

The sequence is that of Arginine/serine-rich coiled-coil protein 2 (RSRC2) from Pongo abelii (Sumatran orangutan).